Consider the following 375-residue polypeptide: Protein RIC-3 (375 aa).

A signal peptide spans 1–29; that stretch reads MALSAVQKVVLFSCLVLCVSLLLPRAYIA. The Lumenal segment spans residues 30 to 90; that stretch reads RGKPAAQEGN…GGGGGTRPSL (61 aa). Polar residues predominate over residues 38 to 47; that stretch reads GNTGLFQSSG. Positions 38-63 are disordered; that stretch reads GNTGLFQSSGHHPKPTDGRPGGAHFP. The helical transmembrane segment at 91–111 threads the bilayer; that stretch reads VGQIIPIYGFGILLYILYILF. Residues 112 to 375 lie on the Cytoplasmic side of the membrane; the sequence is KLSSKGKSTK…RKRNTKGIEY (264 aa). The stretch at 135–165 forms a coiled coil; the sequence is KRKITDYELSQLQDKLKETEEAMEKIISRLG. Residues 251–375 form a disordered region; the sequence is SAEQVAEQMG…RKRNTKGIEY (125 aa). Positions 286 to 296 are enriched in polar residues; that stretch reads GDQQAQGTISA. The span at 305–319 shows a compositional bias: acidic residues; the sequence is EDIEEDEDEDEDPEV. A compositionally biased stretch (basic residues) spans 365–375; the sequence is LRKRNTKGIEY.

Belongs to the ric-3 family.

It localises to the endoplasmic reticulum membrane. Functionally, molecular chaperone which facilitates proper subunit assembly andsurface trafficking of alpha-7 (CHRNA7) and alpha-8 (CHRNA8) nicotinic acetylcholine receptors. May also promote functional expression of homomeric serotoninergic 5-HT3 receptors, and of heteromeric acetylcholine receptors. This is Protein RIC-3 (ric3) from Xenopus tropicalis (Western clawed frog).